Consider the following 363-residue polypeptide: Aminomethyltransferase (363 aa).

This sequence belongs to the GcvT family. The glycine cleavage system is composed of four proteins: P, T, L and H.

The catalysed reaction is N(6)-[(R)-S(8)-aminomethyldihydrolipoyl]-L-lysyl-[protein] + (6S)-5,6,7,8-tetrahydrofolate = N(6)-[(R)-dihydrolipoyl]-L-lysyl-[protein] + (6R)-5,10-methylene-5,6,7,8-tetrahydrofolate + NH4(+). Functionally, the glycine cleavage system catalyzes the degradation of glycine. This chain is Aminomethyltransferase, found in Nitrosomonas eutropha (strain DSM 101675 / C91 / Nm57).